The sequence spans 141 residues: Lutropin subunit beta (141 aa).

The signal sequence occupies residues 1-22; the sequence is MERYQELTVLLLLLLLEGGSWG. 6 disulfide bridges follow: Cys30–Cys78, Cys44–Cys93, Cys47–Cys131, Cys55–Cys109, Cys59–Cys111, and Cys114–Cys121. Residue Asn34 is glycosylated (N-linked (GlcNAc...) asparagine).

It belongs to the glycoprotein hormones subunit beta family. As to quaternary structure, heterodimer of a common alpha chain and a unique beta chain which confers biological specificity to thyrotropin, lutropin, follitropin and gonadotropin.

It is found in the secreted. In terms of biological role, promotes spermatogenesis and ovulation by stimulating the testes and ovaries to synthesize steroids. This Trichosurus vulpecula (Brush-tailed possum) protein is Lutropin subunit beta (LHB).